The chain runs to 353 residues: Photosystem II protein D1 (353 aa).

Thr-2 bears the N-acetylthreonine mark. The residue at position 2 (Thr-2) is a Phosphothreonine. 3 consecutive transmembrane segments (helical) span residues 29 to 46 (YIGW…TATS), 118 to 133 (HFLL…EWEL), and 142 to 156 (WIAV…AATA). Position 118 (His-118) interacts with chlorophyll a. Residue Tyr-126 participates in pheophytin a binding. 2 residues coordinate [CaMn4O5] cluster: Asp-170 and Glu-189. The chain crosses the membrane as a helical span at residues 197–218 (FHMLGVAGVFGGSLFSAMHGSL). Chlorophyll a is bound at residue His-198. A quinone-binding positions include His-215 and 264 to 265 (SF). His-215 contacts Fe cation. A Fe cation-binding site is contributed by His-272. A helical membrane pass occupies residues 274 to 288 (FLAAWPVVGIWFTAL). Residues His-332, Glu-333, Asp-342, and Ala-344 each contribute to the [CaMn4O5] cluster site. Positions 345–353 (AVEAPSTNG) are excised as a propeptide.

The protein belongs to the reaction center PufL/M/PsbA/D family. As to quaternary structure, PSII is composed of 1 copy each of membrane proteins PsbA, PsbB, PsbC, PsbD, PsbE, PsbF, PsbH, PsbI, PsbJ, PsbK, PsbL, PsbM, PsbT, PsbX, PsbY, PsbZ, Psb30/Ycf12, at least 3 peripheral proteins of the oxygen-evolving complex and a large number of cofactors. It forms dimeric complexes. Requires The D1/D2 heterodimer binds P680, chlorophylls that are the primary electron donor of PSII, and subsequent electron acceptors. It shares a non-heme iron and each subunit binds pheophytin, quinone, additional chlorophylls, carotenoids and lipids. D1 provides most of the ligands for the Mn4-Ca-O5 cluster of the oxygen-evolving complex (OEC). There is also a Cl(-1) ion associated with D1 and D2, which is required for oxygen evolution. The PSII complex binds additional chlorophylls, carotenoids and specific lipids. as cofactor. Post-translationally, tyr-161 forms a radical intermediate that is referred to as redox-active TyrZ, YZ or Y-Z. C-terminally processed by CTPA; processing is essential to allow assembly of the oxygen-evolving complex and thus photosynthetic growth.

The protein resides in the plastid. Its subcellular location is the chloroplast thylakoid membrane. It carries out the reaction 2 a plastoquinone + 4 hnu + 2 H2O = 2 a plastoquinol + O2. Photosystem II (PSII) is a light-driven water:plastoquinone oxidoreductase that uses light energy to abstract electrons from H(2)O, generating O(2) and a proton gradient subsequently used for ATP formation. It consists of a core antenna complex that captures photons, and an electron transfer chain that converts photonic excitation into a charge separation. The D1/D2 (PsbA/PsbD) reaction center heterodimer binds P680, the primary electron donor of PSII as well as several subsequent electron acceptors. In Oenothera parviflora (Small-flowered evening primrose), this protein is Photosystem II protein D1.